The primary structure comprises 259 residues: Undecaprenyl-diphosphatase 3 (259 aa).

The next 8 membrane-spanning stretches (helical) occupy residues Met1–Ile21, Ala39–Tyr59, Phe71–Leu91, Ile99–Met119, Ile133–Ile153, Ala174–Val194, Ser208–Ile228, and Leu236–Thr256.

This sequence belongs to the UppP family.

It localises to the cell membrane. The enzyme catalyses di-trans,octa-cis-undecaprenyl diphosphate + H2O = di-trans,octa-cis-undecaprenyl phosphate + phosphate + H(+). Its function is as follows. Catalyzes the dephosphorylation of undecaprenyl diphosphate (UPP). Confers resistance to bacitracin. In Bacillus cereus (strain ATCC 10987 / NRS 248), this protein is Undecaprenyl-diphosphatase 3.